Here is a 412-residue protein sequence, read N- to C-terminus: Chorismate synthase (412 aa).

Positions 40 and 46 each coordinate NADP(+). FMN contacts are provided by residues 135-137 (RAS), 256-257 (QA), Gly300, 315-319 (KPIST), and Arg341. Over residues 391–404 (QREPRQESSDEQPA) the composition is skewed to basic and acidic residues. A disordered region spans residues 391 to 412 (QREPRQESSDEQPARRAANTAG).

The protein belongs to the chorismate synthase family. Homotetramer. Requires FMNH2 as cofactor.

The catalysed reaction is 5-O-(1-carboxyvinyl)-3-phosphoshikimate = chorismate + phosphate. The protein operates within metabolic intermediate biosynthesis; chorismate biosynthesis; chorismate from D-erythrose 4-phosphate and phosphoenolpyruvate: step 7/7. Functionally, catalyzes the anti-1,4-elimination of the C-3 phosphate and the C-6 proR hydrogen from 5-enolpyruvylshikimate-3-phosphate (EPSP) to yield chorismate, which is the branch point compound that serves as the starting substrate for the three terminal pathways of aromatic amino acid biosynthesis. This reaction introduces a second double bond into the aromatic ring system. This chain is Chorismate synthase, found in Mycobacteroides abscessus (strain ATCC 19977 / DSM 44196 / CCUG 20993 / CIP 104536 / JCM 13569 / NCTC 13031 / TMC 1543 / L948) (Mycobacterium abscessus).